A 160-amino-acid polypeptide reads, in one-letter code: Cytochrome b6-f complex subunit 4 (160 aa).

Transmembrane regions (helical) follow at residues 36–56 (LLYI…GLAV), 95–115 (LLGI…PFIE), and 128–148 (IAMA…IGAC).

This sequence belongs to the cytochrome b family. PetD subfamily. In terms of assembly, the 4 large subunits of the cytochrome b6-f complex are cytochrome b6, subunit IV (17 kDa polypeptide, PetD), cytochrome f and the Rieske protein, while the 4 small subunits are PetG, PetL, PetM and PetN. The complex functions as a dimer.

It localises to the cellular thylakoid membrane. In terms of biological role, component of the cytochrome b6-f complex, which mediates electron transfer between photosystem II (PSII) and photosystem I (PSI), cyclic electron flow around PSI, and state transitions. This Prochlorococcus marinus (strain MIT 9313) protein is Cytochrome b6-f complex subunit 4.